Consider the following 238-residue polypeptide: Uridylate kinase (238 aa).

ATP is bound at residue 12–15 (KLSG). Glycine 54 is a UMP binding site. 2 residues coordinate ATP: glycine 55 and arginine 59. Residues aspartate 74 and 135–142 (TGNPYFTT) each bind UMP. ATP contacts are provided by threonine 162, tyrosine 168, and aspartate 171.

Belongs to the UMP kinase family. In terms of assembly, homohexamer.

The protein localises to the cytoplasm. It catalyses the reaction UMP + ATP = UDP + ADP. It functions in the pathway pyrimidine metabolism; CTP biosynthesis via de novo pathway; UDP from UMP (UMPK route): step 1/1. Inhibited by UTP. Functionally, catalyzes the reversible phosphorylation of UMP to UDP. The chain is Uridylate kinase from Oleidesulfovibrio alaskensis (strain ATCC BAA-1058 / DSM 17464 / G20) (Desulfovibrio alaskensis).